Reading from the N-terminus, the 549-residue chain is CTP synthase (549 aa).

An amidoligase domain region spans residues 1–267 (MTKFVFVTGG…AAQVLSLLNL (267 aa)). S13 serves as a coordination point for CTP. S13 provides a ligand contact to UTP. ATP-binding positions include 14-19 (SIGKGI) and D71. Mg(2+)-binding residues include D71 and E141. CTP is bound by residues 148-150 (DIE), 188-193 (KTKPTQ), and K224. Residues 188–193 (KTKPTQ) and K224 each bind UTP. The Glutamine amidotransferase type-1 domain occupies 292 to 534 (EIAIVGKYVR…VQAARTHSSD (243 aa)). Position 354 (G354) interacts with L-glutamine. The active-site Nucleophile; for glutamine hydrolysis is C381. L-glutamine contacts are provided by residues 382 to 385 (LGMQ), E405, and R462. Catalysis depends on residues H507 and E509.

This sequence belongs to the CTP synthase family. Homotetramer.

It carries out the reaction UTP + L-glutamine + ATP + H2O = CTP + L-glutamate + ADP + phosphate + 2 H(+). The catalysed reaction is L-glutamine + H2O = L-glutamate + NH4(+). The enzyme catalyses UTP + NH4(+) + ATP = CTP + ADP + phosphate + 2 H(+). Its pathway is pyrimidine metabolism; CTP biosynthesis via de novo pathway; CTP from UDP: step 2/2. Its activity is regulated as follows. Allosterically activated by GTP, when glutamine is the substrate; GTP has no effect on the reaction when ammonia is the substrate. The allosteric effector GTP functions by stabilizing the protein conformation that binds the tetrahedral intermediate(s) formed during glutamine hydrolysis. Inhibited by the product CTP, via allosteric rather than competitive inhibition. Its function is as follows. Catalyzes the ATP-dependent amination of UTP to CTP with either L-glutamine or ammonia as the source of nitrogen. Regulates intracellular CTP levels through interactions with the four ribonucleotide triphosphates. This chain is CTP synthase, found in Cyanothece sp. (strain PCC 7425 / ATCC 29141).